The chain runs to 78 residues: Large ribosomal subunit protein bL28 (78 aa).

Residues 1–23 (MSRVCQVTGKKPMVGNNRSHAKN) form a disordered region.

The protein belongs to the bacterial ribosomal protein bL28 family.

The chain is Large ribosomal subunit protein bL28 from Shewanella frigidimarina (strain NCIMB 400).